The sequence spans 216 residues: [5-(aminomethyl)furan-3-yl]methyl phosphate kinase (216 aa).

Residues 5-9 (KIGGS), G39, D142, 147-152 (YDKFPG), and G166 contribute to the ATP site.

This sequence belongs to the MfnE family. As to quaternary structure, homotrimer. Mg(2+) serves as cofactor.

The catalysed reaction is [5-(aminomethyl)-3-furyl]methyl phosphate + ATP = [5-(aminomethyl)furan-3-yl]methyl diphosphate + ADP. It functions in the pathway cofactor biosynthesis; methanofuran biosynthesis. With respect to regulation, inhibited by EDTA. Its function is as follows. Catalyzes the formation of 5-(aminomethyl)-3-furanmethanol diphosphate (F1-PP) from 5-(aminomethyl)-3-furanmethanol phosphate (F1-P) and ATP. In vitro, can also act as an adenylate kinase that catalyzes the transfer of a phosphoryl group from ATP to AMP, generating two molecules of ADP. This is [5-(aminomethyl)furan-3-yl]methyl phosphate kinase from Methanocaldococcus jannaschii (strain ATCC 43067 / DSM 2661 / JAL-1 / JCM 10045 / NBRC 100440) (Methanococcus jannaschii).